The following is a 336-amino-acid chain: Coproporphyrin III ferrochelatase (336 aa).

Fe-coproporphyrin III contacts are provided by Ser52 and Tyr116. Fe(2+)-binding residues include His172 and Glu255.

The protein belongs to the ferrochelatase family.

The protein resides in the cytoplasm. It carries out the reaction Fe-coproporphyrin III + 2 H(+) = coproporphyrin III + Fe(2+). The protein operates within porphyrin-containing compound metabolism; protoheme biosynthesis. Functionally, involved in coproporphyrin-dependent heme b biosynthesis. Catalyzes the insertion of ferrous iron into coproporphyrin III to form Fe-coproporphyrin III. The sequence is that of Coproporphyrin III ferrochelatase from Mycolicibacterium paratuberculosis (strain ATCC BAA-968 / K-10) (Mycobacterium paratuberculosis).